A 225-amino-acid polypeptide reads, in one-letter code: UPF0758 protein swp_2203 (225 aa).

Residues Ile-102 to Ile-224 form the MPN domain. His-173, His-175, and Asp-186 together coordinate Zn(2+). Positions His-173–Asp-186 match the JAMM motif motif.

This sequence belongs to the UPF0758 family.

In Shewanella piezotolerans (strain WP3 / JCM 13877), this protein is UPF0758 protein swp_2203.